Here is a 377-residue protein sequence, read N- to C-terminus: tRNA N6-adenosine threonylcarbamoyltransferase (377 aa).

Fe cation-binding residues include His129 and His133. Substrate contacts are provided by residues 151 to 155, Asp184, Gly197, and Asn298; that span reads LVSGG. A Fe cation-binding site is contributed by Asp326. Residues 358-377 form a disordered region; it reads DGAAAKSDPAIGSGRKGPKA.

This sequence belongs to the KAE1 / TsaD family. It depends on Fe(2+) as a cofactor.

It localises to the cytoplasm. It carries out the reaction L-threonylcarbamoyladenylate + adenosine(37) in tRNA = N(6)-L-threonylcarbamoyladenosine(37) in tRNA + AMP + H(+). In terms of biological role, required for the formation of a threonylcarbamoyl group on adenosine at position 37 (t(6)A37) in tRNAs that read codons beginning with adenine. Is involved in the transfer of the threonylcarbamoyl moiety of threonylcarbamoyl-AMP (TC-AMP) to the N6 group of A37, together with TsaE and TsaB. TsaD likely plays a direct catalytic role in this reaction. This chain is tRNA N6-adenosine threonylcarbamoyltransferase, found in Maricaulis maris (strain MCS10) (Caulobacter maris).